We begin with the raw amino-acid sequence, 862 residues long: Protein kintoun (862 aa).

Disordered stretches follow at residues 208–229 (KLLPPLPNVPAPGKTGSERTTK), 564–602 (TKREEHGEPECDEKDGSEAEKARTLQKAKRNSRKKKKER), 626–670 (GEGA…STMP), and 743–854 (RREV…QFKS). Residues 564–586 (TKREEHGEPECDEKDGSEAEKAR) show a composition bias toward basic and acidic residues. A compositionally biased stretch (basic residues) spans 587–601 (TLQKAKRNSRKKKKE). Basic and acidic residues-rich tracts occupy residues 748-757 (RRADARRMSE) and 766-785 (KDAHHHDDEHCSSSDQHDEK).

Belongs to the PIH1 family. Kintoun subfamily.

It localises to the cytoplasm. Functionally, required for cytoplasmic pre-assembly of axonemal dyneins, thereby playing a central role in motility in cilia and flagella. Involved in pre-assembly of dynein arm complexes in the cytoplasm before intraflagellar transport loads them for the ciliary compartment. The chain is Protein kintoun from Anopheles gambiae (African malaria mosquito).